Reading from the N-terminus, the 81-residue chain is Putative defensin-like protein 265 (81 aa).

Positions 1–26 (MEKTVSRKVVVLAILLSLSCLCIAKA) are cleaved as a signal peptide. 3 cysteine pairs are disulfide-bonded: C48-C66, C54-C71, and C58-C73.

The protein belongs to the DEFL family.

The protein resides in the secreted. This Arabidopsis thaliana (Mouse-ear cress) protein is Putative defensin-like protein 265.